The primary structure comprises 357 residues: MKEFKIAVIPGDGIGPDIVREAVKIMTKVGEKYDTKFNFVEVKAGGDAIDAYGEPLPKETIDVCKSSAAVLLGAVGGPKWDNLEGSKRPERALLGLRGALGLYANLRPAKVYNVLKSASPLKNEIIDEGVDLLVVRELIGGIYFGDRGTKEVNGVETAFDTEKYNVDEVKRIAHSAFKAAMKRRKKVTSVDKANVLDASRLWRKTVNEVSKEYPEVELSHLYVDNTAMQLVRKPSQFDVILTNNIFGDILSDEASMITGSIGMLASSSIREDSFGMYEPIHGSAPDIAGLDIANPLAQILSAAMLMEYSLDMSEAARDVEAAVEKVLNEGYRTADIYIEGTKKVGTSEMGNLVLERL.

Position 77-90 (77-90 (GPKWDNLEGSKRPE)) interacts with NAD(+). Residues Arg97, Arg107, Arg136, and Asp224 each coordinate substrate. Asp224, Asp248, and Asp252 together coordinate Mg(2+). 282–294 (GSAPDIAGLDIAN) is an NAD(+) binding site.

The protein belongs to the isocitrate and isopropylmalate dehydrogenases family. LeuB type 1 subfamily. As to quaternary structure, homodimer. Mg(2+) serves as cofactor. Requires Mn(2+) as cofactor.

It is found in the cytoplasm. It carries out the reaction (2R,3S)-3-isopropylmalate + NAD(+) = 4-methyl-2-oxopentanoate + CO2 + NADH. It functions in the pathway amino-acid biosynthesis; L-leucine biosynthesis; L-leucine from 3-methyl-2-oxobutanoate: step 3/4. Functionally, catalyzes the oxidation of 3-carboxy-2-hydroxy-4-methylpentanoate (3-isopropylmalate) to 3-carboxy-4-methyl-2-oxopentanoate. The product decarboxylates to 4-methyl-2 oxopentanoate. The polypeptide is 3-isopropylmalate dehydrogenase (leuB) (Clostridium pasteurianum).